We begin with the raw amino-acid sequence, 446 residues long: D(3) dopamine receptor (446 aa).

The Extracellular segment spans residues 1 to 32; that stretch reads MAPLSQISSHINSTCGAENSTGVNRARPHAYY. N-linked (GlcNAc...) asparagine glycosylation is found at Asn12 and Asn19. The chain crosses the membrane as a helical span at residues 33–55; that stretch reads ALSYCALILAIIFGNGLVCAAVL. Residues 56–65 are Cytoplasmic-facing; the sequence is RERALQTTTN. A helical membrane pass occupies residues 66-88; the sequence is YLVVSLAVADLLVATLVMPWVVY. The Extracellular portion of the chain corresponds to 89-104; sequence LEVTGGVWNFSRICCD. An N-linked (GlcNAc...) asparagine glycan is attached at Asn97. Cys103 and Cys181 form a disulfide bridge. The chain crosses the membrane as a helical span at residues 105-126; that stretch reads VFVTLDVMMCTASILNLCAISI. The Cytoplasmic portion of the chain corresponds to 127–149; that stretch reads DRYTAVVMPVHYQHGTGQSSCRR. The helical transmembrane segment at 150 to 170 threads the bilayer; the sequence is VALMITAVWVLAFAVSCPLLF. Topologically, residues 171 to 187 are extracellular; sequence GFNTTGDPSICSISNPD. Residue Asn173 is glycosylated (N-linked (GlcNAc...) asparagine). Residues 188 to 209 form a helical membrane-spanning segment; it reads FVIYSSVVSFYVPFGVTVLVYA. The Cytoplasmic segment spans residues 210-375; sequence RIYMVLRQRR…VPLREKKATQ (166 aa). A helical transmembrane segment spans residues 376–397; the sequence is MVVIVLGAFIVCWLPFFLTHVL. Over 398 to 412 the chain is Extracellular; that stretch reads NTHCQACHVSPELYR. Cys401 and Cys404 are oxidised to a cystine. The helical transmembrane segment at 413–432 threads the bilayer; the sequence is ATTWLGYVNSALNPVIYTTF. Topologically, residues 433 to 446 are cytoplasmic; that stretch reads NIEFRKAFLKILSC.

Belongs to the G-protein coupled receptor 1 family. In terms of assembly, interacts with CLIC6. Interacts with GRK4. Interacts with PALM. Interacts with FLNA (via filamin repeat 21); increases PKA-mediated phosphorylation of FLNA. Post-translationally, phosphorylated by GRK4. Palmitoylated.

The protein resides in the cell membrane. Functionally, dopamine receptor whose activity is mediated by G proteins which inhibit adenylyl cyclase. Promotes cell proliferation. The protein is D(3) dopamine receptor (Drd3) of Mus musculus (Mouse).